The following is an 80-amino-acid chain: Gamma-conotoxin PnVIIA (80 aa).

The N-terminal stretch at 1-19 (MEKLTILLLVAAVLMSTQA) is a signal peptide. A propeptide spanning residues 20–43 (QNQEQRQQAKINFLSKRKPSAERW) is cleaved from the precursor. 3 cysteine pairs are disulfide-bonded: Cys47–Cys61, Cys54–Cys65, and Cys60–Cys70. At Glu59 the chain carries 4-carboxyglutamate. Glu71 is subject to 4-carboxyglutamate. 4-hydroxyproline is present on Pro76. A propeptide spanning residues 78–80 (FGA) is cleaved from the precursor.

As to expression, expressed by the venom duct.

It is found in the secreted. Functionally, gamma-conotoxins may act on voltage-gated non-specific cation pacemaker channels (HCN). Triggers depolarization and firing of action potential bursts in the caudodorsal neurons of lymnaea. This effect is due to activation or enhancement of a slow inward cation current that may underlie endogenous bursting activity of these neurons. In Conus pennaceus (Feathered cone), this protein is Gamma-conotoxin PnVIIA.